We begin with the raw amino-acid sequence, 21 residues long: Cupiennin-6e (21 aa).

A Serine amide modification is found at serine 21.

Expressed by the venom gland.

The protein resides in the secreted. The chain is Cupiennin-6e from Cupiennius salei (American wandering spider).